We begin with the raw amino-acid sequence, 203 residues long: Microtubule-associated protein Jupiter (203 aa).

Ser30 bears the Phosphoserine mark. Thr41 and Thr102 each carry phosphothreonine. Residues 123-132 (LISKGNYNGK) are compositionally biased toward polar residues. Disordered stretches follow at residues 123-163 (LISK…GNPV) and 182-203 (NGGS…SGLW). The segment covering 133–146 (SGSVSSASSSVSSS) has biased composition (low complexity). 2 positions are modified to phosphoserine: Ser135 and Ser146.

It belongs to the MAP Jupiter family.

It is found in the nucleus. The protein resides in the cytoplasm. The protein localises to the cytoskeleton. Its subcellular location is the spindle. Binds to all microtubule populations. The polypeptide is Microtubule-associated protein Jupiter (Drosophila mojavensis (Fruit fly)).